The primary structure comprises 148 residues: MKLLVQRVNEAKVDINGITKSKINDGFLVLLGIHKEDNESDIDYCIRKLINLRIFSDEDDKLNLSIKDLNYEILLVSQFTLYASTRKGNRPSFDKCAKGEFAKNLYDNFIKKLKLENVPFQTGEFGADMKVSLTNDGPVTIIIDSRSE.

The short motif at 137-138 (GP) is the Gly-cisPro motif, important for rejection of L-amino acids element.

It belongs to the DTD family. As to quaternary structure, homodimer.

It is found in the cytoplasm. The enzyme catalyses glycyl-tRNA(Ala) + H2O = tRNA(Ala) + glycine + H(+). It carries out the reaction a D-aminoacyl-tRNA + H2O = a tRNA + a D-alpha-amino acid + H(+). In terms of biological role, an aminoacyl-tRNA editing enzyme that deacylates mischarged D-aminoacyl-tRNAs. Also deacylates mischarged glycyl-tRNA(Ala), protecting cells against glycine mischarging by AlaRS. Acts via tRNA-based rather than protein-based catalysis; rejects L-amino acids rather than detecting D-amino acids in the active site. By recycling D-aminoacyl-tRNA to D-amino acids and free tRNA molecules, this enzyme counteracts the toxicity associated with the formation of D-aminoacyl-tRNA entities in vivo and helps enforce protein L-homochirality. In Finegoldia magna (strain ATCC 29328 / DSM 20472 / WAL 2508) (Peptostreptococcus magnus), this protein is D-aminoacyl-tRNA deacylase.